Consider the following 536-residue polypeptide: Solute carrier family 2, facilitated glucose transporter member 10 (536 aa).

The Cytoplasmic portion of the chain corresponds to 1–15; the sequence is MGLRPAVLLLCASVS. Residues 16 to 36 traverse the membrane as a helical segment; it reads LLGGLTFGYELAVISGALLPL. Over 37 to 48 the chain is Extracellular; that stretch reads QLNFGLSCLEQE. A helical transmembrane segment spans residues 49–69; it reads LLVGSLLLGALLASLVGGFLI. Residues 70-82 are Cytoplasmic-facing; that stretch reads DCYGRRRAILGSN. A helical transmembrane segment spans residues 83-103; that stretch reads AVLLAGSLILGLASSLPWLLL. Residues 104–107 lie on the Extracellular side of the membrane; sequence GRLS. A helical membrane pass occupies residues 108-128; sequence VGFAISLSSMACCIYVSELVG. The Cytoplasmic segment spans residues 129–132; sequence PRQR. The chain crosses the membrane as a helical span at residues 133-153; that stretch reads GVLVSLYEVGITVGILFSYGL. The Extracellular segment spans residues 154-166; that stretch reads NYVLAGSPWGWRH. Residues 167–187 form a helical membrane-spanning segment; sequence MFGWAAAPALLQSLSLFLLPA. Residues 188–232 lie on the Cytoplasmic side of the membrane; it reads GAEGTAAPKDLIPLQGRETSKPGLVKPQYSFLDLFRAQDGMWSRT. The chain crosses the membrane as a helical span at residues 233-253; the sequence is VVGLGLVLFQQLTGQPNVLYY. 242–243 contributes to the D-glucose binding site; the sequence is QQ. Residues 254–269 are Extracellular-facing; sequence ASTIFRSVGFHGGSSA. Residues 270–290 traverse the membrane as a helical segment; sequence VLASVGLGTVKVAATLVATGL. Residues 291–298 are Cytoplasmic-facing; that stretch reads VDRAGRRV. A helical membrane pass occupies residues 299-319; that stretch reads LLLFGCALMALSVSGIGLVSF. Residues 320 to 402 are Extracellular-facing; that stretch reads AVSLDSGPSC…VPTSPILEHT (83 aa). The helical transmembrane segment at 403–423 threads the bilayer; it reads LLCWSALVCMMVYVSAFSVGF. Topologically, residues 424-442 are cytoplasmic; that stretch reads GPVTWLVLSEIYPAEIRGR. Residue tryptophan 428 participates in D-glucose binding. The helical transmembrane segment at 443–463 threads the bilayer; sequence AFAFCSSFNWAANLFISLSFL. The Extracellular portion of the chain corresponds to 464-468; it reads DLIGA. A helical membrane pass occupies residues 469 to 489; it reads IGLAWTFLLYGLTAVLGLAFI. The Cytoplasmic portion of the chain corresponds to 490 to 536; sequence YLLVPETKGQSLAEIEQQFQTSRFPLNFGHRQRIGIQYHRLDVSSAS.

Belongs to the major facilitator superfamily. Sugar transporter (TC 2.A.1.1) family. Glucose transporter subfamily.

Its subcellular location is the endomembrane system. It is found in the cytoplasm. It localises to the perinuclear region. The enzyme catalyses D-glucose(out) = D-glucose(in). Its function is as follows. Facilitative glucose transporter required for the development of the cardiovascular system. The chain is Solute carrier family 2, facilitated glucose transporter member 10 from Mus musculus (Mouse).